The primary structure comprises 234 residues: Arsenate respiratory reductase iron-sulfur subunit ArrB (234 aa).

3 consecutive 4Fe-4S ferredoxin-type domains span residues L3–I32, V48–R79, and G80–A109. Positions 12, 15, 18, 22, 57, 60, 65, 69, 89, 92, 95, 99, 164, 167, 179, and 183 each coordinate [4Fe-4S] cluster.

Heterodimer composed of one large subunit (ArrA) and one small subunit (ArrB). The cofactor is [4Fe-4S] cluster.

Its subcellular location is the periplasm. Phosphate is a competitive inhibitor. Its function is as follows. Component of the arsenate respiratory reductase (Arr) complex, which catalyzes the reduction of arsenate (As(V)) to arsenite (As(III)). ArrB is probably the electron transfer subunit. The periplasmic localization of this complex may allow the cell to couple arsenate reduction to energy production before arsenate can be transported to the cell cytoplasm and enter the ars detoxification pathway, an energy-requiring process. The polypeptide is Arsenate respiratory reductase iron-sulfur subunit ArrB (Shewanella sp. (strain ANA-3)).